Here is a 551-residue protein sequence, read N- to C-terminus: Glucose-6-phosphate isomerase 2 (551 aa).

The Proton donor role is filled by E359. Active-site residues include H390 and K514.

This sequence belongs to the GPI family.

The protein localises to the cytoplasm. It catalyses the reaction alpha-D-glucose 6-phosphate = beta-D-fructose 6-phosphate. It functions in the pathway carbohydrate biosynthesis; gluconeogenesis. The protein operates within carbohydrate degradation; glycolysis; D-glyceraldehyde 3-phosphate and glycerone phosphate from D-glucose: step 2/4. In terms of biological role, catalyzes the reversible isomerization of glucose-6-phosphate to fructose-6-phosphate. This chain is Glucose-6-phosphate isomerase 2, found in Streptomyces coelicolor (strain ATCC BAA-471 / A3(2) / M145).